Reading from the N-terminus, the 177-residue chain is Phosphatidylglycerol/phosphatidylinositol transfer protein (177 aa).

An N-terminal signal peptide occupies residues 1-17 (MRLSAAVIALLSTSAAA). Positions 18–30 (FSVYRENSVSAND) are excised as a propeptide.

This sequence belongs to the NPC2 family. In terms of assembly, monomer.

Functionally, catalyzes the intermembrane transfer of phosphatidylglycerol and phosphatidylinositol. This is Phosphatidylglycerol/phosphatidylinositol transfer protein (npc-2) from Neurospora crassa (strain ATCC 24698 / 74-OR23-1A / CBS 708.71 / DSM 1257 / FGSC 987).